A 577-amino-acid polypeptide reads, in one-letter code: Arginine--tRNA ligase (577 aa).

Residues 132–142 carry the 'HIGH' region motif; the sequence is ANPTGPLHVGH.

The protein belongs to the class-I aminoacyl-tRNA synthetase family. Monomer.

The protein localises to the cytoplasm. It catalyses the reaction tRNA(Arg) + L-arginine + ATP = L-arginyl-tRNA(Arg) + AMP + diphosphate. This chain is Arginine--tRNA ligase, found in Herminiimonas arsenicoxydans.